The primary structure comprises 489 residues: Monocarboxylate transporter 2 (489 aa).

The Cytoplasmic segment spans residues 1-21; the sequence is MPSESSVKATAAPPPFPLPPD. A helical membrane pass occupies residues 22-42; the sequence is GGWGWVVVCASFISIGFSYAF. The Extracellular portion of the chain corresponds to 43 to 65; sequence PKAVTVFFNDIKDIFKTTSSQIA. The chain crosses the membrane as a helical span at residues 66–86; it reads WISSIMLAVMYAGGPISSVLV. The Cytoplasmic segment spans residues 87-95; the sequence is NNYGSRPVV. Residues 96–116 traverse the membrane as a helical segment; sequence IVGGLLCCTGMILASFSSSVI. At 117 to 121 the chain is on the extracellular side; sequence ELYLT. A helical membrane pass occupies residues 122–142; the sequence is VGFIGGLGLAFNLQPALTIIG. Over 143–154 the chain is Cytoplasmic; it reads KYFYRKRPLANG. A helical membrane pass occupies residues 155–175; it reads FAMAGSPVFLSTLAPFNQFLF. Residues 176–179 lie on the Extracellular side of the membrane; sequence NSYG. The chain crosses the membrane as a helical span at residues 180–200; that stretch reads WKGSFLILGAIFLHSCVAGCL. The Cytoplasmic portion of the chain corresponds to 201–250; it reads MRPVGPSPRAAKSKSKVGSRQDSSTKRLSKVSTAEKINRFLDFGLFTHRG. Positions 206-227 are disordered; the sequence is PSPRAAKSKSKVGSRQDSSTKR. Residues 251–271 form a helical membrane-spanning segment; it reads FLIYLSGNVVLFLGMFAPIIF. At 272 to 286 the chain is on the extracellular side; that stretch reads LAPYAKDKGVDDYNS. The helical transmembrane segment at 287-307 threads the bilayer; the sequence is AFLLSVMAFTDMFARPSVGLI. Residues 308-316 are Cytoplasmic-facing; the sequence is ANTSLIRPR. The chain crosses the membrane as a helical span at residues 317–337; that stretch reads IQYLFSVAIMFTGICHLLCPL. Over 338–342 the chain is Extracellular; sequence AHSYT. A helical transmembrane segment spans residues 343-363; that stretch reads ALVVYVIFFGIGFGSISSLLF. Over 364–377 the chain is Cytoplasmic; it reads ECLMDQVGASRFSS. Residues 378–398 form a helical membrane-spanning segment; that stretch reads AVGLVTIVECCPVLFGPPLAG. The Extracellular segment spans residues 399–410; it reads KLLDITGQYKYL. The helical transmembrane segment at 411–431 threads the bilayer; sequence YIASGIVVLSSGIYLLICNAI. At 432–489 the chain is on the cytoplasmic side; that stretch reads NYRLLEKERKREKARRKKSASQASKEMEALSRSKQDDVTVKVSNTHNPPSDRDKESSI. The segment at 441–489 is disordered; the sequence is KREKARRKKSASQASKEMEALSRSKQDDVTVKVSNTHNPPSDRDKESSI. Composition is skewed to basic and acidic residues over residues 456 to 470 and 480 to 489; these read KEME…DDVT and PSDRDKESSI.

It belongs to the major facilitator superfamily. Monocarboxylate porter (TC 2.A.1.13) family. In terms of assembly, homodimer. Interacts with GRID2IP. Interacts with EMB; interaction mediates SLC16A7 targeting to the plasma membrane. Interacts with isoform 2 of BSG. Detected in brain and kidney (at protein level).

The protein resides in the cell membrane. Its subcellular location is the basolateral cell membrane. The protein localises to the cytoplasm. It carries out the reaction 3-methyl-2-oxobutanoate(out) + H(+)(out) = 3-methyl-2-oxobutanoate(in) + H(+)(in). It catalyses the reaction (S)-lactate(in) + H(+)(in) = (S)-lactate(out) + H(+)(out). The catalysed reaction is acetoacetate(out) + H(+)(out) = acetoacetate(in) + H(+)(in). The enzyme catalyses (R)-3-hydroxybutanoate(out) + H(+)(out) = (R)-3-hydroxybutanoate(in) + H(+)(in). It carries out the reaction 4-methyl-2-oxopentanoate(out) + H(+)(out) = 4-methyl-2-oxopentanoate(in) + H(+)(in). It catalyses the reaction pyruvate(out) + H(+)(out) = pyruvate(in) + H(+)(in). The catalysed reaction is (S)-3-hydroxybutanoate(out) + H(+)(out) = (S)-3-hydroxybutanoate(in) + H(+)(in). With respect to regulation, transport activity exhibits steep dependence on substrate concentration. Substrate concentration sensitivity of SLC16A7 arises from the strong inter-subunit cooperativity of the SLC16A7 dimer during transport. Inhibited by AR-C155858. Functionally, proton-coupled monocarboxylate symporter. Catalyzes the rapid transport across the plasma membrane of monocarboxylates such as L-lactate, pyruvate and ketone bodies, acetoacetate, beta-hydroxybutyrate and acetate. Dimerization is functionally required and both subunits work cooperatively in transporting substrate. In Rattus norvegicus (Rat), this protein is Monocarboxylate transporter 2 (Slc16a7).